An 80-amino-acid chain; its full sequence is Putative membrane protein insertion efficiency factor (80 aa).

The interval 61–80 is disordered; that stretch reads KTGKDPVPDHFSLKRNQEGE. Basic and acidic residues predominate over residues 62–80; sequence TGKDPVPDHFSLKRNQEGE.

The protein belongs to the UPF0161 family.

It localises to the cell membrane. Its function is as follows. Could be involved in insertion of integral membrane proteins into the membrane. This Streptococcus pneumoniae serotype 2 (strain D39 / NCTC 7466) protein is Putative membrane protein insertion efficiency factor.